Consider the following 368-residue polypeptide: Quinolinate synthase (368 aa).

Iminosuccinate contacts are provided by H46 and S63. Residue C110 participates in [4Fe-4S] cluster binding. Residues Y141–N143 and S162 contribute to the iminosuccinate site. A [4Fe-4S] cluster-binding site is contributed by C230. Residues H256–E258 and T273 each bind iminosuccinate. C320 is a binding site for [4Fe-4S] cluster.

Belongs to the quinolinate synthase family. Type 3 subfamily. Requires [4Fe-4S] cluster as cofactor.

It is found in the cytoplasm. It catalyses the reaction iminosuccinate + dihydroxyacetone phosphate = quinolinate + phosphate + 2 H2O + H(+). It functions in the pathway cofactor biosynthesis; NAD(+) biosynthesis; quinolinate from iminoaspartate: step 1/1. In terms of biological role, catalyzes the condensation of iminoaspartate with dihydroxyacetone phosphate to form quinolinate. This chain is Quinolinate synthase, found in Bacillus thuringiensis subsp. konkukian (strain 97-27).